Here is a 242-residue protein sequence, read N- to C-terminus: 7-cyano-7-deazaguanine synthase (242 aa).

Residue 13 to 23 participates in ATP binding; the sequence is FSGGQDSSVCL. Cys-201, Cys-216, Cys-219, and Cys-222 together coordinate Zn(2+).

The protein belongs to the QueC family. Zn(2+) is required as a cofactor.

The enzyme catalyses 7-carboxy-7-deazaguanine + NH4(+) + ATP = 7-cyano-7-deazaguanine + ADP + phosphate + H2O + H(+). Its pathway is purine metabolism; 7-cyano-7-deazaguanine biosynthesis. Functionally, catalyzes the ATP-dependent conversion of 7-carboxy-7-deazaguanine (CDG) to 7-cyano-7-deazaguanine (preQ(0)). This Caulobacter vibrioides (strain ATCC 19089 / CIP 103742 / CB 15) (Caulobacter crescentus) protein is 7-cyano-7-deazaguanine synthase.